A 309-amino-acid chain; its full sequence is Transcriptional regulator HilD (309 aa).

The 98-residue stretch at 209-306 (ERVYNIISSS…KTTPSTFIKM (98 aa)) folds into the HTH araC/xylS-type domain. DNA-binding regions (H-T-H motif) lie at residues 226–247 (TDVA…AEEG) and 273–296 (VNAV…KKYF).

The sequence is that of Transcriptional regulator HilD (hilD) from Salmonella typhimurium (strain SL1344).